The chain runs to 336 residues: Probable GTPase MT1543 (336 aa).

GTP contacts are provided by residues 67–75 (GVPGVGKST), Asp-209, and 245–247 (SAV).

It belongs to the SIMIBI class G3E GTPase family. ArgK/MeaB subfamily. Homodimer.

Probable GTPase. May also bind and hydrolyze ATP. May function as chaperone. In Mycobacterium tuberculosis (strain CDC 1551 / Oshkosh), this protein is Probable GTPase MT1543.